We begin with the raw amino-acid sequence, 330 residues long: 5'-AMP-activated protein kinase subunit gamma-1 (330 aa).

The disordered stretch occupies residues 1 to 24; that stretch reads MEAVPSSDSYPAVENEHLQETPES. CBS domains lie at 43–103, 125–187, and 198–260; these read PTSS…KSAL, SFKP…PKPE, and IGTY…NLDV. Residues arginine 70, 85–90, valine 130, 151–152, and lysine 170 each bind ADP; these read MLTITD and HR. AMP contacts are provided by residues arginine 70, 85–90, valine 130, histidine 151, 151–152, lysine 170, threonine 200, alanine 205, 226–227, and 242–245; these read MLTITD, HR, SA, and SKFD. Residues arginine 70, 85–90, valine 130, 151–152, arginine 152, and lysine 170 contribute to the ATP site; these read MLTITD and HR. The short motif at 138–159 is the AMPK pseudosubstrate element; sequence LFDAVSSLIRNKIHRLPVIDPE. 242-245 is an ADP binding site; sequence SKFD. 242–245 contacts ATP; it reads SKFD. Serine 261 carries the phosphoserine; by ULK1 modification. Phosphothreonine; by ULK1 is present on threonine 263. Arginine 269 serves as a coordination point for ADP. Arginine 269 contacts AMP. Residue arginine 269 coordinates ATP. Phosphoserine; by ULK1 is present on serine 270. The 58-residue stretch at 272–329 folds into the CBS 4 domain; the sequence is YFEGVLKCYLHETLETIINRLVEAEVHRLVVVDENDVVKGIVSLSDILQALVLTGGEK. ADP contacts are provided by residues leucine 277 and 298 to 299; that span reads HR. Residues leucine 277, histidine 298, 298 to 299, and 314 to 317 contribute to the AMP site; these read HR and SLSD. Residues leucine 277 and 298-299 contribute to the ATP site; that span reads HR.

Belongs to the 5'-AMP-activated protein kinase gamma subunit family. In terms of assembly, AMPK is a heterotrimer of an alpha catalytic subunit (PRKAA1 or PRKAA2), a beta (PRKAB1 or PRKAB2) and a gamma non-catalytic subunits (PRKAG1, PRKAG2 or PRKAG3). Interacts with FNIP1 and FNIP2. Phosphorylated by ULK1 and ULK2; leading to negatively regulate AMPK activity and suggesting the existence of a regulatory feedback loop between ULK1, ULK2 and AMPK. In terms of processing, glycosylated; O-GlcNAcylated by OGT, promoting the AMP-activated protein kinase (AMPK) activity.

In terms of biological role, AMP/ATP-binding subunit of AMP-activated protein kinase (AMPK), an energy sensor protein kinase that plays a key role in regulating cellular energy metabolism. In response to reduction of intracellular ATP levels, AMPK activates energy-producing pathways and inhibits energy-consuming processes: inhibits protein, carbohydrate and lipid biosynthesis, as well as cell growth and proliferation. AMPK acts via direct phosphorylation of metabolic enzymes, and by longer-term effects via phosphorylation of transcription regulators. Also acts as a regulator of cellular polarity by remodeling the actin cytoskeleton; probably by indirectly activating myosin. Gamma non-catalytic subunit mediates binding to AMP, ADP and ATP, leading to activate or inhibit AMPK: AMP-binding results in allosteric activation of alpha catalytic subunit (PRKAA1 or PRKAA2) both by inducing phosphorylation and preventing dephosphorylation of catalytic subunits. ADP also stimulates phosphorylation, without stimulating already phosphorylated catalytic subunit. ATP promotes dephosphorylation of catalytic subunit, rendering the AMPK enzyme inactive. This is 5'-AMP-activated protein kinase subunit gamma-1 (PRKAG1) from Bos taurus (Bovine).